Reading from the N-terminus, the 620-residue chain is Putative ribonuclease H protein At1g65750 (620 aa).

The RNase H type-1 domain maps to 456 to 586 (CVGWVKVNTD…ADGLANYAFS (131 aa)). Asp-465, Glu-505, Asp-529, and Asp-578 together coordinate Mg(2+).

It depends on Mg(2+) as a cofactor.

The catalysed reaction is Endonucleolytic cleavage to 5'-phosphomonoester.. The polypeptide is Putative ribonuclease H protein At1g65750 (Arabidopsis thaliana (Mouse-ear cress)).